The following is a 152-amino-acid chain: CASP-like protein 5C1 (152 aa).

Topologically, residues 1 to 12 are cytoplasmic; sequence MVRTTASFGTSS. Residues 13–33 traverse the membrane as a helical segment; the sequence is SFVLRLGQTLFSSASLLFMCF. Over 34–44 the chain is Extracellular; it reads NDDEDFYAYTT. A helical transmembrane segment spans residues 45–65; the sequence is FCYLVTVMGLVTPWSVTLALM. The Cytoplasmic portion of the chain corresponds to 66–80; the sequence is EAYSILVKKLPMQAT. A helical membrane pass occupies residues 81-101; it reads VISVIVAGDFVLSFLSLGGAC. Topologically, residues 102–126 are extracellular; that stretch reads STASVAVLLMDAGEKQCDRYKLSAT. The helical transmembrane segment at 127 to 147 threads the bilayer; sequence MAFLSSFLSFASTFFNFCLLP. The Cytoplasmic segment spans residues 148–152; it reads SLMSH.

This sequence belongs to the Casparian strip membrane proteins (CASP) family. As to quaternary structure, homodimer and heterodimers.

It is found in the cell membrane. The chain is CASP-like protein 5C1 from Arabidopsis thaliana (Mouse-ear cress).